We begin with the raw amino-acid sequence, 89 residues long: Small ribosomal subunit protein uS15 (89 aa).

The protein belongs to the universal ribosomal protein uS15 family. Part of the 30S ribosomal subunit. Forms a bridge to the 50S subunit in the 70S ribosome, contacting the 23S rRNA.

Functionally, one of the primary rRNA binding proteins, it binds directly to 16S rRNA where it helps nucleate assembly of the platform of the 30S subunit by binding and bridging several RNA helices of the 16S rRNA. In terms of biological role, forms an intersubunit bridge (bridge B4) with the 23S rRNA of the 50S subunit in the ribosome. The chain is Small ribosomal subunit protein uS15 from Chlamydia felis (strain Fe/C-56) (Chlamydophila felis).